Reading from the N-terminus, the 179-residue chain is Translation initiation factor IF-3 (179 aa).

It belongs to the IF-3 family. In terms of assembly, monomer.

The protein localises to the cytoplasm. IF-3 binds to the 30S ribosomal subunit and shifts the equilibrium between 70S ribosomes and their 50S and 30S subunits in favor of the free subunits, thus enhancing the availability of 30S subunits on which protein synthesis initiation begins. The protein is Translation initiation factor IF-3 of Proteus hauseri.